Reading from the N-terminus, the 806-residue chain is Disintegrin and metalloproteinase domain-containing protein 1b (806 aa).

The first 33 residues, 1 to 33 (MERLKLGKIPEHWCIRLVAMLLLAIIFLPSTFC), serve as a signal peptide directing secretion. The disordered stretch occupies residues 169-188 (CSVTPKDSPGDTSHPPRSRK). The 195-residue stretch at 203-397 (KYVEMFVVVN…HRGVCLLDEP (195 aa)) folds into the Peptidase M12B domain. N-linked (GlcNAc...) asparagine glycosylation occurs at Asn224. Disulfide bonds link Cys313–Cys392, Cys353–Cys376, Cys355–Cys361, Cys462–Cys482, Cys635–Cys647, Cys641–Cys653, and Cys655–Cys664. His338 is a binding site for Zn(2+). Glu339 is a catalytic residue. Zn(2+) contacts are provided by His342 and His348. Residues Asn375 and Asn476 are each glycosylated (N-linked (GlcNAc...) asparagine). The region spanning 406-490 (AANCGNGVVE…ACPSDRKAQD (85 aa)) is the Disintegrin domain. Residues 631–665 (FSFPCSPSKQCNKHGVCNDLGNCHCSFGFAPPDCK) form the EGF-like domain. The interval 668–694 (GTGGSVDSGPAVNLSNDSSPGPNSTQS) is disordered. Asn680, Asn683, and Asn690 each carry an N-linked (GlcNAc...) asparagine glycan. A compositionally biased stretch (polar residues) spans 680–694 (NLSNDSSPGPNSTQS). A helical transmembrane segment spans residues 705–725 (LIVLAVILVLMILLIIICIIS). Topologically, residues 726–806 (AYTKSETASE…KDEDEEEGEE (81 aa)) are cytoplasmic. The segment at 735–806 (EAGPSELEEL…KDEDEEEGEE (72 aa)) is disordered. Residues 740–806 (ELEELPEGEK…KDEDEEEGEE (67 aa)) are compositionally biased toward acidic residues.

Heterodimer with ADAM2/fertilin subunit beta. In terms of tissue distribution, testis.

Its subcellular location is the membrane. May play a role in spermatogenesis and sperm maturation. The chain is Disintegrin and metalloproteinase domain-containing protein 1b (Adam1b) from Mus musculus (Mouse).